A 226-amino-acid chain; its full sequence is Transmembrane protein 98 (226 aa).

Topologically, residues Met1–Thr3 are cytoplasmic. Residues Val4–Val24 form a helical membrane-spanning segment. Topologically, residues Val25–Ile226 are extracellular.

It belongs to the TMEM98 family.

The protein localises to the endoplasmic reticulum membrane. It is found in the cell membrane. Its subcellular location is the secreted. It localises to the extracellular exosome. The sequence is that of Transmembrane protein 98 (tmem98) from Xenopus laevis (African clawed frog).